The following is a 392-amino-acid chain: Galactose-1-phosphate uridylyltransferase (392 aa).

Zn(2+) contacts are provided by C52 and C55. Residues A61 and 77 to 78 each bind UDP-alpha-D-glucose; that span reads ND. Position 126 (H126) interacts with Zn(2+). N194 contributes to the UDP-alpha-D-glucose binding site. Zn(2+) is bound at residue H205. H207 (tele-UMP-histidine intermediate) is an active-site residue. Position 209 (Q209) interacts with UDP-alpha-D-glucose. Fe cation is bound by residues E223, H323, H340, and H342. Residues 355–358 and 360–361 contribute to the UDP-alpha-D-glucose site; these read KFLV and YE.

The protein belongs to the galactose-1-phosphate uridylyltransferase type 1 family. As to quaternary structure, homodimer. Requires Zn(2+) as cofactor.

It carries out the reaction alpha-D-galactose 1-phosphate + UDP-alpha-D-glucose = alpha-D-glucose 1-phosphate + UDP-alpha-D-galactose. It participates in carbohydrate metabolism; galactose metabolism. This is Galactose-1-phosphate uridylyltransferase (gal-7) from Neurospora crassa (strain ATCC 24698 / 74-OR23-1A / CBS 708.71 / DSM 1257 / FGSC 987).